The chain runs to 539 residues: Chaperonin GroEL 2 (539 aa).

ATP contacts are provided by residues 29–32 (TLGP), 86–90 (DGTTT), glycine 413, 477–479 (NAA), and aspartate 493. Residues 519–539 (VVDKPEEEDSAAAGHGHGHSH) form a disordered region.

Belongs to the chaperonin (HSP60) family. In terms of assembly, forms a cylinder of 14 subunits composed of two heptameric rings stacked back-to-back. Interacts with the co-chaperonin GroES.

The protein resides in the cytoplasm. It carries out the reaction ATP + H2O + a folded polypeptide = ADP + phosphate + an unfolded polypeptide.. In terms of biological role, together with its co-chaperonin GroES, plays an essential role in assisting protein folding. The GroEL-GroES system forms a nano-cage that allows encapsulation of the non-native substrate proteins and provides a physical environment optimized to promote and accelerate protein folding. In Saccharopolyspora erythraea (strain ATCC 11635 / DSM 40517 / JCM 4748 / NBRC 13426 / NCIMB 8594 / NRRL 2338), this protein is Chaperonin GroEL 2.